The primary structure comprises 165 residues: V-type proton ATPase 16 kDa proteolipid subunit (165 aa).

Residues 1–10 (MSSVFSGDET) lie on the Lumenal side of the membrane. Residues 11–33 (APFFGFLGAAAALVFSCMGAAYG) form a helical membrane-spanning segment. The Cytoplasmic portion of the chain corresponds to 34–55 (TAKSGVGVASMGVMRPELVMKS). Residues 56–76 (IVPVVMAGVLGIYGLIIAVII) traverse the membrane as a helical segment. Over 77–95 (STGINPKAKPYFLFDGYAH) the chain is Lumenal. The helical transmembrane segment at 96–117 (LSSGLACGLAGLAAGMAIGIVG) threads the bilayer. Residues 118–129 (DAGVRANAQQPK) are Cytoplasmic-facing. The chain crosses the membrane as a helical span at residues 130-155 (LFVGMILILIFAEALALYGLIVGIIL). Residues 156–165 (SSRAGQSRAD) are Lumenal-facing.

It belongs to the V-ATPase proteolipid subunit family. V-ATPase is a heteromultimeric enzyme composed of a peripheral catalytic V1 complex (main components: subunits A, B, C, D, E, and F) attached to an integral membrane V0 proton pore complex (main component: the proteolipid protein; which is present as a hexamer that forms the proton-conducting pore).

The protein resides in the vacuole membrane. Proton-conducting pore forming subunit of the membrane integral V0 complex of vacuolar ATPase. V-ATPase is responsible for acidifying a variety of intracellular compartments in eukaryotic cells. This chain is V-type proton ATPase 16 kDa proteolipid subunit (VATP-P1), found in Avena sativa (Oat).